A 189-amino-acid polypeptide reads, in one-letter code: Mediator of RNA polymerase II transcription subunit 30 (189 aa).

A coiled-coil region spans residues 138 to 178 (SPESEDEIEKLEEQALSLRMEIAKKNVHVKELIDKLRELIA).

This sequence belongs to the plant Mediator complex subunit 30 family. In terms of assembly, component of the Mediator complex.

The protein resides in the nucleus. Component of the Mediator complex, a coactivator involved in the regulated transcription of nearly all RNA polymerase II-dependent genes. Mediator functions as a bridge to convey information from gene-specific regulatory proteins to the basal RNA polymerase II transcription machinery. The Mediator complex, having a compact conformation in its free form, is recruited to promoters by direct interactions with regulatory proteins and serves for the assembly of a functional preinitiation complex with RNA polymerase II and the general transcription factors. In Arabidopsis thaliana (Mouse-ear cress), this protein is Mediator of RNA polymerase II transcription subunit 30 (MED30).